The primary structure comprises 73 residues: Large ribosomal subunit protein bL28 (73 aa).

Belongs to the bacterial ribosomal protein bL28 family.

The polypeptide is Large ribosomal subunit protein bL28 (Anaeromyxobacter dehalogenans (strain 2CP-1 / ATCC BAA-258)).